We begin with the raw amino-acid sequence, 463 residues long: Siroheme synthase (463 aa).

A precorrin-2 dehydrogenase /sirohydrochlorin ferrochelatase region spans residues 1–203; that stretch reads MDYLPLFHKL…GQGAEAERLL (203 aa). Residues 22 to 23 and 43 to 44 contribute to the NAD(+) site; these read EI and PE. Phosphoserine is present on Ser-128. Residues 216-463 form a uroporphyrinogen-III C-methyltransferase region; that stretch reads GEVYLVGAGP…LAWFEGAQNS (248 aa). Pro-225 contributes to the S-adenosyl-L-methionine binding site. Asp-248 serves as the catalytic Proton acceptor. The active-site Proton donor is Lys-270. S-adenosyl-L-methionine contacts are provided by residues 301–303, Ile-306, 331–332, Met-383, and Gly-412; these read GGD and TA.

The protein in the N-terminal section; belongs to the precorrin-2 dehydrogenase / sirohydrochlorin ferrochelatase family. In the C-terminal section; belongs to the precorrin methyltransferase family.

The catalysed reaction is uroporphyrinogen III + 2 S-adenosyl-L-methionine = precorrin-2 + 2 S-adenosyl-L-homocysteine + H(+). It carries out the reaction precorrin-2 + NAD(+) = sirohydrochlorin + NADH + 2 H(+). The enzyme catalyses siroheme + 2 H(+) = sirohydrochlorin + Fe(2+). It participates in cofactor biosynthesis; adenosylcobalamin biosynthesis; precorrin-2 from uroporphyrinogen III: step 1/1. Its pathway is cofactor biosynthesis; adenosylcobalamin biosynthesis; sirohydrochlorin from precorrin-2: step 1/1. The protein operates within porphyrin-containing compound metabolism; siroheme biosynthesis; precorrin-2 from uroporphyrinogen III: step 1/1. It functions in the pathway porphyrin-containing compound metabolism; siroheme biosynthesis; siroheme from sirohydrochlorin: step 1/1. It participates in porphyrin-containing compound metabolism; siroheme biosynthesis; sirohydrochlorin from precorrin-2: step 1/1. Its function is as follows. Multifunctional enzyme that catalyzes the SAM-dependent methylations of uroporphyrinogen III at position C-2 and C-7 to form precorrin-2 via precorrin-1. Then it catalyzes the NAD-dependent ring dehydrogenation of precorrin-2 to yield sirohydrochlorin. Finally, it catalyzes the ferrochelation of sirohydrochlorin to yield siroheme. The sequence is that of Siroheme synthase from Pseudomonas entomophila (strain L48).